Here is a 160-residue protein sequence, read N- to C-terminus: Cytochrome b6-f complex subunit 4 (160 aa).

3 helical membrane-spanning segments follow: residues 36–56, 95–115, and 131–151; these read LLYI…GLAI, LLGV…PFLE, and TVFL…TLPI.

Belongs to the cytochrome b family. PetD subfamily. In terms of assembly, the 4 large subunits of the cytochrome b6-f complex are cytochrome b6, subunit IV (17 kDa polypeptide, petD), cytochrome f and the Rieske protein, while the 4 small subunits are petG, petL, petM and petN. The complex functions as a dimer.

Its subcellular location is the plastid. The protein resides in the chloroplast thylakoid membrane. Component of the cytochrome b6-f complex, which mediates electron transfer between photosystem II (PSII) and photosystem I (PSI), cyclic electron flow around PSI, and state transitions. This is Cytochrome b6-f complex subunit 4 from Oenothera elata subsp. hookeri (Hooker's evening primrose).